The chain runs to 98 residues: NADH-ubiquinone oxidoreductase chain 4L (98 aa).

The next 3 membrane-spanning stretches (helical) occupy residues 2–22 (PSISININLAFAAALLGMLMF), 29–49 (SLLCLEGMMLSMFTLSTLIIL), and 61–81 (ILLLVFAACEAAIGLALLVTV).

This sequence belongs to the complex I subunit 4L family. As to quaternary structure, core subunit of respiratory chain NADH dehydrogenase (Complex I) which is composed of 45 different subunits.

The protein resides in the mitochondrion inner membrane. The catalysed reaction is a ubiquinone + NADH + 5 H(+)(in) = a ubiquinol + NAD(+) + 4 H(+)(out). Its function is as follows. Core subunit of the mitochondrial membrane respiratory chain NADH dehydrogenase (Complex I) which catalyzes electron transfer from NADH through the respiratory chain, using ubiquinone as an electron acceptor. Part of the enzyme membrane arm which is embedded in the lipid bilayer and involved in proton translocation. This Microcebus mamiratra (Claire's mouse lemur) protein is NADH-ubiquinone oxidoreductase chain 4L (MT-ND4L).